A 166-amino-acid chain; its full sequence is Protein phosphatase 1 regulatory subunit 1A (166 aa).

M1 carries the N-acetylmethionine modification. A disordered region spans residues 1–166 (MEQDNSPRKI…SQDSQGASAV (166 aa)). Residues 9 to 12 (KIQF) form an essential for activity region. Positions 19-29 (PHLDPEAAEQI) are enriched in basic and acidic residues. T35 carries the phosphothreonine; by PKA modification. The essential for activity stretch occupies residues 42-54 (TSDQSSPEVDEDR). S43, S46, S47, and S67 each carry phosphoserine. Over residues 104-114 (AAEGTGAQESQ) the composition is skewed to low complexity. Over residues 143–152 (AQERRGEEPS) the composition is skewed to basic and acidic residues. Residues 143–166 (AQERRGEEPSTAKTSQDSQGASAV) form an interaction with PPP1R15A region. The segment covering 153–166 (TAKTSQDSQGASAV) has biased composition (polar residues).

The protein belongs to the protein phosphatase inhibitor 1 family. Interacts with PPP1R15A. Post-translationally, phosphorylation of Thr-35 is required for activity.

Its function is as follows. Inhibitor of protein-phosphatase 1. This protein may be important in hormonal control of glycogen metabolism. Hormones that elevate intracellular cAMP increase I-1 activity in many tissues. I-1 activation may impose cAMP control over proteins that are not directly phosphorylated by PKA. Following a rise in intracellular calcium, I-1 is inactivated by calcineurin (or PP2B). Does not inhibit type-2 phosphatases. In Oryctolagus cuniculus (Rabbit), this protein is Protein phosphatase 1 regulatory subunit 1A (PPP1R1A).